The following is a 154-amino-acid chain: MAARLCCQLDPARDVLCLRPVGAESRGRPLPGPLGAIPPASPSTVPTDHGAHLSLRGLPVCAFSSAGPCALRFTSARRMETTVNAHRNLPKVLHKRTLGLSVMSTTDLEAYFKDCVFTEWEELGEEMRLKVFVLGGCRHKLVCSPAPCNFFTSA.

Residues 68–117 (PCALRFTSARRMETTVNAHRNLPKVLHKRTLGLSVMSTTDLEAYFKDCVF) form a mitochondrial targeting sequence region.

The protein belongs to the orthohepadnavirus protein X family. May form homodimer. May interact with host CEBPA, CFLAR, CREB1, DDB1, E4F1, HBXIP, HSPD1/HSP60, NFKBIA, POLR2E and SMAD4. Interacts with host SMC5-SMC6 complex and induces its degradation. Interacts with host TRPC4AP; leading to prevent ubiquitination of TRPC4AP. Interacts with host PLSCR1; this interaction promotes ubiquitination and degradation of HBx and impairs HBx-mediated cell proliferation. In terms of processing, a fraction may be phosphorylated in insect cells and HepG2 cells, a human hepatoblastoma cell line. Phosphorylated in vitro by host protein kinase C or mitogen-activated protein kinase. N-acetylated in insect cells.

It localises to the host cytoplasm. It is found in the host nucleus. Its subcellular location is the host mitochondrion. Multifunctional protein that plays a role in silencing host antiviral defenses and promoting viral transcription. Does not seem to be essential for HBV infection. May be directly involved in development of cirrhosis and liver cancer (hepatocellular carcinoma). Most of cytosolic activities involve modulation of cytosolic calcium. The effect on apoptosis is controversial depending on the cell types in which the studies have been conducted. May induce apoptosis by localizing in mitochondria and causing loss of mitochondrial membrane potential. May also modulate apoptosis by binding host CFLAR, a key regulator of the death-inducing signaling complex (DISC). Promotes viral transcription by using the host E3 ubiquitin ligase DDB1 to target the SMC5-SMC6 complex to proteasomal degradation. This host complex would otherwise bind to viral episomal DNA, and prevents its transcription. Moderately stimulates transcription of many different viral and cellular transcription elements. Promoters and enhancers stimulated by HBx contain DNA binding sites for NF-kappa-B, AP-1, AP-2, c-EBP, ATF/CREB, or the calcium-activated factor NF-AT. This Hepatitis B virus genotype B1 (isolate Japan/Yamagata-2/1998) (HBV-B) protein is Protein X.